The following is a 192-amino-acid chain: MADSQNQGSAEPSQAAAAAAAADAAAAAEEVMAEGGAQGGDSDSASSDSDGVVGQMAEEPQTPAENAPKPRNDFIESLPNSVKCRVLALKKLQKRCDKIEAKFDKEFQALEKKYNDIYKPLLAKIQELTGEMEGCAWTLEGDEEDDDDDEYEDEEEGEEEDEEEEEPAAEAAGTAAAKDEGPHSAVPDDAKK.

Over residues 1–12 (MADSQNQGSAEP) the composition is skewed to polar residues. Residues 1–76 (MADSQNQGSA…APKPRNDFIE (76 aa)) are disordered. Low complexity-rich tracts occupy residues 15–28 (AAAA…AAAA) and 40–55 (GDSD…VVGQ). Positions 86 to 112 (VLALKKLQKRCDKIEAKFDKEFQALEK) form a coiled coil. The tract at residues 136–192 (AWTLEGDEEDDDDDEYEDEEEGEEEDEEEEEPAAEAAGTAAAKDEGPHSAVPDDAKK) is disordered. A compositionally biased stretch (acidic residues) spans 140-168 (EGDEEDDDDDEYEDEEEGEEEDEEEEEPA). Basic and acidic residues predominate over residues 177 to 192 (AKDEGPHSAVPDDAKK).

The protein belongs to the nucleosome assembly protein (NAP) family.

Its subcellular location is the nucleus. This Bos taurus (Bovine) protein is Nucleosome assembly protein 1-like 5 (NAP1L5).